A 212-amino-acid chain; its full sequence is ATP phosphoribosyltransferase 2 (212 aa).

The protein belongs to the ATP phosphoribosyltransferase family. Short subfamily. In terms of assembly, heteromultimer composed of HisG and HisZ subunits.

Its subcellular location is the cytoplasm. The enzyme catalyses 1-(5-phospho-beta-D-ribosyl)-ATP + diphosphate = 5-phospho-alpha-D-ribose 1-diphosphate + ATP. The protein operates within amino-acid biosynthesis; L-histidine biosynthesis; L-histidine from 5-phospho-alpha-D-ribose 1-diphosphate: step 1/9. Its function is as follows. Catalyzes the condensation of ATP and 5-phosphoribose 1-diphosphate to form N'-(5'-phosphoribosyl)-ATP (PR-ATP). Has a crucial role in the pathway because the rate of histidine biosynthesis seems to be controlled primarily by regulation of HisG enzymatic activity. The polypeptide is ATP phosphoribosyltransferase 2 (hisG2) (Geobacter sulfurreducens (strain ATCC 51573 / DSM 12127 / PCA)).